Consider the following 426-residue polypeptide: Target of rapamycin complex 2 subunit AVO2 (426 aa).

5 ANK repeats span residues 4-33 (EPSVRLREAIIEGNLLIVKRLLRRNPDLLT), 39-68 (NGWSSLHYASYHGRYLICVYLIQLGHDKHE), 74-104 (KGNTCVHLALMKGHEQTLHLLLQQFPRFINH), 108-137 (NGRAPIHIACMNDYYQCLSLLIGVGADLWV), and 141-171 (NGDTPLHVCLEYGSISCMKMLLNEGEVSLDD). The tract at residues 259–302 (STHTTSGNGGNRRSSITNPVFNPRKPTLSTDSFSSSSNSSSRLR) is disordered. The segment covering 260–278 (THTTSGNGGNRRSSITNPV) has biased composition (polar residues). A compositionally biased stretch (low complexity) spans 285–302 (TLSTDSFSSSSNSSSRLR). A phosphoserine mark is found at S315 and S350. Residues 350-359 (SNDNVRGDSQ) show a composition bias toward polar residues. The tract at residues 350–392 (SNDNVRGDSQTATINDDGGGGNGGDATIGMGLRKDPDDENENK) is disordered. The segment covering 366–375 (DGGGGNGGDA) has biased composition (gly residues). A compositionally biased stretch (basic and acidic residues) spans 381 to 392 (LRKDPDDENENK).

The target of rapamycin complex 2 (TORC2) is composed of at least AVO1, AVO2, BIT61, LST8, TOR2 and TSC11. TORC2 forms a homodimer. Contrary to TORC1, TORC2 does not bind to and is not sensitive to FKBP-rapamycin. AVO2 is peripherally associated to AVO1 and TSC11.

The protein localises to the cell membrane. The protein resides in the vacuole membrane. Functionally, component of TORC2, which regulates cell cycle-dependent polarization of the actin-cytoskeleton and cell wall integrity. TORC2 controls polarity of the actin cytoskeleton, which is required for orienting the secretory pathway toward discrete growth sites, via the RHO1/PKC1/MAPK cell integrity pathway. This is Target of rapamycin complex 2 subunit AVO2 (AVO2) from Saccharomyces cerevisiae (strain ATCC 204508 / S288c) (Baker's yeast).